Here is a 198-residue protein sequence, read N- to C-terminus: Recombination protein RecR (198 aa).

A C4-type zinc finger spans residues 57-72 (CSVCGRLTDDDPCSIC). Residues 80–175 (TTILVLEDSR…KVTRLARGLA (96 aa)) enclose the Toprim domain.

It belongs to the RecR family.

Functionally, may play a role in DNA repair. It seems to be involved in an RecBC-independent recombinational process of DNA repair. It may act with RecF and RecO. In Streptococcus pneumoniae (strain Hungary19A-6), this protein is Recombination protein RecR.